A 39-amino-acid chain; its full sequence is Omega-theraphotoxin-Asp1g (39 aa).

Cystine bridges form between C4–C25, C8–C31, and C17–C36.

It belongs to the neurotoxin 12 (Hwtx-2) family. 06 (TXP1) subfamily. Expressed by the venom gland.

The protein localises to the secreted. Functionally, inhibits voltage-gated calcium channels (Cav) in rat cerebellar granule cells. Has insecticidal activity. This chain is Omega-theraphotoxin-Asp1g, found in Aphonopelma sp. (American tarantula).